The chain runs to 424 residues: Mitogen-activated protein kinase mpkA (424 aa).

In terms of domain architecture, Protein kinase spans 23–314; the sequence is YNVTKELGQG…VEEALEHPYL (292 aa). ATP contacts are provided by residues 29-37 and lysine 52; that span reads LGQGAYGIV. The tract at residues 375–424 is disordered; it reads QQIAQQTNVPIPDHQQGGWKQEEPKPQEVHAAGGHVNDLESSLQRGMDVQ.

The protein belongs to the protein kinase superfamily. Ser/Thr protein kinase family. In terms of assembly, interacts with flbB, flbC, brlA, and rasB. Interacts with fmqA and fmqC. Interacts with hsp90. Mg(2+) is required as a cofactor. In terms of processing, phosphorylated by the upstreamm MAPKK mkk2. Phosphorylation is induced during asexual development. Phosphorylation is regulated by rlmA.

The enzyme catalyses L-seryl-[protein] + ATP = O-phospho-L-seryl-[protein] + ADP + H(+). It catalyses the reaction L-threonyl-[protein] + ATP = O-phospho-L-threonyl-[protein] + ADP + H(+). With respect to regulation, activated by threonine and tyrosine phosphorylation by the upstreamm MAPKK mkk2. Its function is as follows. Mitogen-activated protein kinase; part of cell wall integrity (CWI) signaling pathway composed of pkcA, the bck1-mkk2-mpka MAPK cascade and the downstream rlmA transcription regulator. The CWI signaling pathway regulates cell wall integrity and pyomelanin formation. CWI also controls oxidative stress response, gliotoxin production, iron adaptation and asexual development. Finally, CWI is constitutively required for A.fumigatus to cope with the temperature increase found in the mammalian lung environment, during infection. MpkA positively modulates the expression of fumiquinazoline cluster during conidiogenesis and directly phosphorylates fmqC, and perhaps also fmqA. The chain is Mitogen-activated protein kinase mpkA from Aspergillus fumigatus (strain ATCC MYA-4609 / CBS 101355 / FGSC A1100 / Af293) (Neosartorya fumigata).